The chain runs to 80 residues: uncharacterized protein (80 aa).

This is an uncharacterized protein from Synechococcus sp. (strain PCC 6716).